Reading from the N-terminus, the 116-residue chain is Cation channel sperm-associated auxiliary subunit TMEM262 (116 aa).

Topologically, residues 1-16 (MWLQDRIATFFFPKGM) are cytoplasmic. A helical membrane pass occupies residues 17–38 (MLTTAALMLFFLHLGIFIRDVH). The Extracellular segment spans residues 39 to 51 (NFCITYHYDHMSF). Residues 52–72 (HYTVVLMFSQVISICWAAMGS) traverse the membrane as a helical segment. The Cytoplasmic segment spans residues 73–84 (LYAEMTENKYVC). The chain crosses the membrane as a helical span at residues 85-107 (FSALTILMLNGAMFFNRLSLEFL). The Extracellular segment spans residues 108-116 (AIEYREEHH).

In terms of assembly, component of the CatSper complex or CatSpermasome composed of the core pore-forming members CATSPER1, CATSPER2, CATSPER3 and CATSPER4 as well as auxiliary members CATSPERB, CATSPERG, CATSPERD, CATSPERE, CATSPERZ, C2CD6/CATSPERT, TMEM249, TMEM262 and EFCAB9. HSPA1 may be an additional auxiliary complex member. The core complex members CATSPER1, CATSPER2, CATSPER3 and CATSPER4 form a heterotetrameric channel. The auxiliary CATSPERB, CATSPERG, CATSPERD and CATSPERE subunits form a pavilion-like structure over the pore which stabilizes the complex through interactions with CATSPER4, CATSPER3, CATSPER1 and CATSPER2 respectively. TMEM262/CATSPERH interacts with CATSPERB, further stabilizing the complex. C2CD6/CATSPERT interacts at least with CATSPERD and is required for targeting the CatSper complex in the flagellar membrane.

It localises to the cell projection. The protein resides in the cilium. It is found in the flagellum membrane. Auxiliary component of the CatSper complex, a complex involved in sperm cell hyperactivation. The protein is Cation channel sperm-associated auxiliary subunit TMEM262 of Homo sapiens (Human).